The following is a 287-amino-acid chain: GDT1-like protein C17G8.08c (287 aa).

7 helical membrane-spanning segments follow: residues Trp-7–Met-27, Leu-50–Ala-70, Ala-89–Pro-109, Leu-112–Ala-132, Val-194–Glu-214, Val-232–Ile-252, and Met-267–Phe-287.

Belongs to the GDT1 family.

The protein resides in the membrane. This is GDT1-like protein C17G8.08c from Schizosaccharomyces pombe (strain 972 / ATCC 24843) (Fission yeast).